The sequence spans 381 residues: 1-deoxy-D-xylulose 5-phosphate reductoisomerase (381 aa).

8 residues coordinate NADPH: serine 10, glycine 11, serine 12, isoleucine 13, glycine 36, lysine 37, asparagine 38, and asparagine 121. Lysine 122 is a 1-deoxy-D-xylulose 5-phosphate binding site. Glutamate 123 is an NADPH binding site. Residue aspartate 147 coordinates Mn(2+). Residues serine 148, glutamate 149, serine 173, and histidine 196 each coordinate 1-deoxy-D-xylulose 5-phosphate. Glutamate 149 provides a ligand contact to Mn(2+). Glycine 202 lines the NADPH pocket. 1-deoxy-D-xylulose 5-phosphate is bound by residues serine 209, asparagine 214, lysine 215, and glutamate 218. Glutamate 218 lines the Mn(2+) pocket.

Belongs to the DXR family. It depends on Mg(2+) as a cofactor. Mn(2+) serves as cofactor.

The catalysed reaction is 2-C-methyl-D-erythritol 4-phosphate + NADP(+) = 1-deoxy-D-xylulose 5-phosphate + NADPH + H(+). The protein operates within isoprenoid biosynthesis; isopentenyl diphosphate biosynthesis via DXP pathway; isopentenyl diphosphate from 1-deoxy-D-xylulose 5-phosphate: step 1/6. Its function is as follows. Catalyzes the NADPH-dependent rearrangement and reduction of 1-deoxy-D-xylulose-5-phosphate (DXP) to 2-C-methyl-D-erythritol 4-phosphate (MEP). This is 1-deoxy-D-xylulose 5-phosphate reductoisomerase from Geobacillus sp. (strain WCH70).